Here is a 327-residue protein sequence, read N- to C-terminus: Tetraacyldisaccharide 4'-kinase (327 aa).

52-59 (TLGGAGKT) lines the ATP pocket.

Belongs to the LpxK family.

The enzyme catalyses a lipid A disaccharide + ATP = a lipid IVA + ADP + H(+). It participates in glycolipid biosynthesis; lipid IV(A) biosynthesis; lipid IV(A) from (3R)-3-hydroxytetradecanoyl-[acyl-carrier-protein] and UDP-N-acetyl-alpha-D-glucosamine: step 6/6. In terms of biological role, transfers the gamma-phosphate of ATP to the 4'-position of a tetraacyldisaccharide 1-phosphate intermediate (termed DS-1-P) to form tetraacyldisaccharide 1,4'-bis-phosphate (lipid IVA). This chain is Tetraacyldisaccharide 4'-kinase, found in Methylorubrum populi (strain ATCC BAA-705 / NCIMB 13946 / BJ001) (Methylobacterium populi).